We begin with the raw amino-acid sequence, 439 residues long: sn-glycerol-3-phosphate-binding periplasmic protein UgpB (439 aa).

Positions 1-25 (MFNNAIRKTSICVALTLAFSANAMA) are cleaved as a signal peptide. 7 residues coordinate sn-glycerol 3-phosphate: tyrosine 67, glutamate 91, serine 146, serine 272, glycine 309, tyrosine 348, and arginine 399.

This sequence belongs to the bacterial solute-binding protein 1 family. The complex is composed of two ATP-binding proteins (UgpC), two transmembrane proteins (UgpA and UgpE) and a solute-binding protein (UgpB).

It localises to the periplasm. Its function is as follows. Part of the ABC transporter complex UgpBAEC involved in sn-glycerol-3-phosphate (G3P) import. Binds G3P. The sequence is that of sn-glycerol-3-phosphate-binding periplasmic protein UgpB (ugpB) from Yersinia enterocolitica serotype O:8 / biotype 1B (strain NCTC 13174 / 8081).